A 383-amino-acid polypeptide reads, in one-letter code: Probable indole-3-pyruvate monooxygenase YUCCA10 (383 aa).

9–14 contacts FAD; the sequence is GAGPAG. 177 to 182 lines the NADP(+) pocket; it reads GGGNSG.

Belongs to the FMO family. Requires FAD as cofactor.

The catalysed reaction is indole-3-pyruvate + NADPH + O2 + H(+) = (indol-3-yl)acetate + CO2 + NADP(+) + H2O. It functions in the pathway plant hormone metabolism; auxin biosynthesis. Involved in auxin biosynthesis. The sequence is that of Probable indole-3-pyruvate monooxygenase YUCCA10 (YUC10) from Arabidopsis thaliana (Mouse-ear cress).